Here is a 165-residue protein sequence, read N- to C-terminus: Large ribosomal subunit protein uL10 (165 aa).

It belongs to the universal ribosomal protein uL10 family. As to quaternary structure, part of the ribosomal stalk of the 50S ribosomal subunit. The N-terminus interacts with L11 and the large rRNA to form the base of the stalk. The C-terminus forms an elongated spine to which L12 dimers bind in a sequential fashion forming a multimeric L10(L12)X complex.

In terms of biological role, forms part of the ribosomal stalk, playing a central role in the interaction of the ribosome with GTP-bound translation factors. This chain is Large ribosomal subunit protein uL10, found in Edwardsiella ictaluri (strain 93-146).